The sequence spans 99 residues: MPRSLKKGPFIDIKLEKRILDMNSKGEKKVIKTWSRSSMISPDFVGHTVAVHNGKNHVPVYVGDNMVGHKLGEFAPTRSFRGHAGGGKAEKGGSAPRKK.

Residues 76-99 (PTRSFRGHAGGGKAEKGGSAPRKK) form a disordered region.

The protein belongs to the universal ribosomal protein uS19 family.

Its function is as follows. Protein S19 forms a complex with S13 that binds strongly to the 16S ribosomal RNA. This is Small ribosomal subunit protein uS19 from Pelodictyon phaeoclathratiforme (strain DSM 5477 / BU-1).